Consider the following 512-residue polypeptide: Histidine ammonia-lyase (512 aa).

The 5-imidazolinone (Ala-Gly) cross-link spans 142–144 (ASG). The residue at position 143 (Ser143) is a 2,3-didehydroalanine (Ser).

Belongs to the PAL/histidase family. In terms of processing, contains an active site 4-methylidene-imidazol-5-one (MIO), which is formed autocatalytically by cyclization and dehydration of residues Ala-Ser-Gly.

The protein localises to the cytoplasm. The enzyme catalyses L-histidine = trans-urocanate + NH4(+). The protein operates within amino-acid degradation; L-histidine degradation into L-glutamate; N-formimidoyl-L-glutamate from L-histidine: step 1/3. The protein is Histidine ammonia-lyase of Bartonella quintana (strain Toulouse) (Rochalimaea quintana).